Here is a 701-residue protein sequence, read N- to C-terminus: Elongation factor G (701 aa).

Residues 8–291 (SRYRNIGIVA…AVIDFLPAPT (284 aa)) enclose the tr-type G domain. GTP-binding positions include 17–24 (AHVDAGKT), 89–93 (DTPGH), and 143–146 (NKMD).

This sequence belongs to the TRAFAC class translation factor GTPase superfamily. Classic translation factor GTPase family. EF-G/EF-2 subfamily.

Its subcellular location is the cytoplasm. In terms of biological role, catalyzes the GTP-dependent ribosomal translocation step during translation elongation. During this step, the ribosome changes from the pre-translocational (PRE) to the post-translocational (POST) state as the newly formed A-site-bound peptidyl-tRNA and P-site-bound deacylated tRNA move to the P and E sites, respectively. Catalyzes the coordinated movement of the two tRNA molecules, the mRNA and conformational changes in the ribosome. This is Elongation factor G from Pseudomonas fluorescens (strain Pf0-1).